The chain runs to 195 residues: Large ribosomal subunit protein bL25 (195 aa).

This sequence belongs to the bacterial ribosomal protein bL25 family. CTC subfamily. Part of the 50S ribosomal subunit; part of the 5S rRNA/L5/L18/L25 subcomplex. Contacts the 5S rRNA. Binds to the 5S rRNA independently of L5 and L18.

Functionally, this is one of the proteins that binds to the 5S RNA in the ribosome where it forms part of the central protuberance. In Chlorobium chlorochromatii (strain CaD3), this protein is Large ribosomal subunit protein bL25.